The following is a 334-amino-acid chain: MIEADRLIAPENPSFREEDVIDRAIRPKKLADYQGQDHVRDQMEIFIKAAQLRNEALDHLLIFGPPGLGKTTLANIVANEMEVNIRTTSGPVLEKAGDLAALLTNLEENDVLFIDEIHRLSPMVEEVLYPAMEDYQLDIMIGEGPAARSIKIDLPPFTLIGATTRAGSLTSPLRDRFGITQRLEYYKVKDLQDIVQRSADCLGLSMESEGALEVARRARGTPRIANRLLRRVRDYAEVKGNGHICADTADKALNMLDVDAEGFDYMDRKLLLAIMEKFGGGPVGLDNMAAAIGEEKDTIEDVLEPYLIQQGYLQRTPRGRIATDRAYLHFGIEK.

The segment at alanine 4–tyrosine 186 is large ATPase domain (RuvB-L). ATP is bound by residues isoleucine 25, arginine 26, glycine 67, lysine 70, threonine 71, threonine 72, glutamate 133–tyrosine 135, arginine 176, tyrosine 186, and arginine 223. Threonine 71 contributes to the Mg(2+) binding site. The small ATPAse domain (RuvB-S) stretch occupies residues lysine 187–aspartate 257. The tract at residues alanine 260–lysine 334 is head domain (RuvB-H). Residues arginine 315 and arginine 320 each coordinate DNA.

Belongs to the RuvB family. As to quaternary structure, homohexamer. Forms an RuvA(8)-RuvB(12)-Holliday junction (HJ) complex. HJ DNA is sandwiched between 2 RuvA tetramers; dsDNA enters through RuvA and exits via RuvB. An RuvB hexamer assembles on each DNA strand where it exits the tetramer. Each RuvB hexamer is contacted by two RuvA subunits (via domain III) on 2 adjacent RuvB subunits; this complex drives branch migration. In the full resolvosome a probable DNA-RuvA(4)-RuvB(12)-RuvC(2) complex forms which resolves the HJ.

Its subcellular location is the cytoplasm. The enzyme catalyses ATP + H2O = ADP + phosphate + H(+). Its function is as follows. The RuvA-RuvB-RuvC complex processes Holliday junction (HJ) DNA during genetic recombination and DNA repair, while the RuvA-RuvB complex plays an important role in the rescue of blocked DNA replication forks via replication fork reversal (RFR). RuvA specifically binds to HJ cruciform DNA, conferring on it an open structure. The RuvB hexamer acts as an ATP-dependent pump, pulling dsDNA into and through the RuvAB complex. RuvB forms 2 homohexamers on either side of HJ DNA bound by 1 or 2 RuvA tetramers; 4 subunits per hexamer contact DNA at a time. Coordinated motions by a converter formed by DNA-disengaged RuvB subunits stimulates ATP hydrolysis and nucleotide exchange. Immobilization of the converter enables RuvB to convert the ATP-contained energy into a lever motion, pulling 2 nucleotides of DNA out of the RuvA tetramer per ATP hydrolyzed, thus driving DNA branch migration. The RuvB motors rotate together with the DNA substrate, which together with the progressing nucleotide cycle form the mechanistic basis for DNA recombination by continuous HJ branch migration. Branch migration allows RuvC to scan DNA until it finds its consensus sequence, where it cleaves and resolves cruciform DNA. This chain is Holliday junction branch migration complex subunit RuvB, found in Vibrio campbellii (strain ATCC BAA-1116).